The following is a 517-amino-acid chain: DNA-binding protein Ikaros (517 aa).

Residues Met-1 to Cys-71 are disordered. Ser-13 bears the Phosphoserine mark. The residue at position 23 (Thr-23) is a Phosphothreonine. Positions Leu-37 to Ser-47 are enriched in polar residues. Lys-58 is covalently cross-linked (Glycyl lysine isopeptide (Lys-Gly) (interchain with G-Cter in SUMO)). Phosphoserine occurs at positions 63 and 101. Residues Leu-117–His-139 form a C2H2-type 1 zinc finger. Thr-140 carries the post-translational modification Phosphothreonine. Residues Phe-144–His-166 form a C2H2-type 2 zinc finger. A required for both high-affinity DNA binding and pericentromeric heterochromatin localization region spans residues Phe-153–His-162. Phosphoserine is present on Ser-167. The C2H2-type 3 zinc-finger motif lies at Phe-172–His-194. A required for both high-affinity DNA binding and pericentromeric heterochromatin localization region spans residues Tyr-179 to His-194. The residue at position 195 (Ser-195) is a Phosphoserine. The C2H2-type 4 zinc-finger motif lies at His-200 to His-223. Lys-239 is covalently cross-linked (Glycyl lysine isopeptide (Lys-Gly) (interchain with G-Cter in SUMO)). Residues Ser-259, Ser-287, Ser-293, Ser-357, Ser-360, Ser-384, Ser-386, Ser-388, and Ser-392 each carry the phosphoserine modification. The disordered stretch occupies residues Ser-376–Glu-400. Thr-393 bears the Phosphothreonine mark. 2 positions are modified to phosphoserine: Ser-397 and Ser-440. 2 consecutive C2H2-type zinc fingers follow at residues Tyr-457–His-479 and Phe-488–His-512. A required for binding PP1CC region spans residues Arg-463 to Phe-466.

The protein belongs to the Ikaros C2H2-type zinc-finger protein family. In terms of assembly, heterodimer with other IKAROS family members. Interacts with IKZF4 and IKZF5. Component of the chromatin-remodeling NuRD repressor complex which includes at least HDAC1, HDAC2, RBBP4, RBBP7, IKZF1, MTA2, MBD2, MBD3, MTA1L1, CHD3 and CHD4. Interacts directly with the CHD4 component of the NuRD complex. Interacts directly with SMARCA4; the interaction associates IKFZ1 with the BAF complex. Interacts with SUMO1; the interaction sumoylates IKAROS, promoted by PIAS2 and PIAS3. Interacts with PIAS2 (isoform alpha); the interaction promotes sumoylation and reduces transcription repression. Interacts, to a lesser extent, with PIAS3. Interacts with PPP1CC; the interaction targets PPP1CC to pericentromeric heterochromatin, dephosphorylates IKAROS, stabilizes it and prevents it from degradation. Interacts with IKZF3. In terms of processing, phosphorylation at Ser-357 and Ser-360 downstream of SYK induces nuclear translocation. Phosphorylation controls cell-cycle progression from late G(1) stage to S stage. Hyperphosphorylated during G2/M phase. Dephosphorylated state during late G(1) phase. Phosphorylation on Thr-140 is required for DNA and pericentromeric location during mitosis. CK2 is the main kinase, in vitro. GSK3 and CDK may also contribute to phosphorylation of the C-terminal serine and threonine residues. Phosphorylation on these C-terminal residues reduces the DNA-binding ability. Phosphorylation/dephosphorylation events on Ser-13 and Ser-293 regulate TDT expression during thymocyte differentiation. Dephosphorylation by protein phosphatase 1 regulates stability and pericentromeric heterochromatin location. Phosphorylated in both lymphoid and non-lymphoid tissues. Sumoylated. Simultaneous sumoylation on the 2 sites results in a loss of both HDAC-dependent and HDAC-independent repression. Has no effect on pericentromeric heterochromatin location. Desumoylated by SENP1. Post-translationally, polyubiquitinated. In terms of tissue distribution, strongly expressed in T-cells and their progenitors,in B-cells, and in all early embryonic retinal progenitor cells (RPCs). Isoforms V and VI are the predominant isoforms in lymphocytes.

The protein resides in the nucleus. It localises to the cytoplasm. Functionally, transcription regulator of hematopoietic cell differentiation. Binds gamma-satellite DNA. Binds with higher affinity to gamma satellite A. Plays a role in the development of lymphocytes, B- and T-cells. Binds and activates the enhancer (delta-A element) of the CD3-delta gene. Repressor of the TDT (terminal deoxynucleotidyltransferase) gene during thymocyte differentiation. Regulates transcription through association with both HDAC-dependent and HDAC-independent complexes. Targets the 2 chromatin-remodeling complexes, NuRD and BAF (SWI/SNF), in a single complex (PYR complex), to the beta-globin locus in adult erythrocytes. Increases normal apoptosis in adult erythroid cells. Confers early temporal competence to retinal progenitor cells (RPCs). Function is isoform-specific and is modulated by dominant-negative inactive isoforms. The chain is DNA-binding protein Ikaros (Ikzf1) from Mus musculus (Mouse).